The primary structure comprises 121 residues: Phosphoribosyl-ATP pyrophosphatase (121 aa).

This sequence belongs to the PRA-PH family.

Its subcellular location is the cytoplasm. It carries out the reaction 1-(5-phospho-beta-D-ribosyl)-ATP + H2O = 1-(5-phospho-beta-D-ribosyl)-5'-AMP + diphosphate + H(+). The protein operates within amino-acid biosynthesis; L-histidine biosynthesis; L-histidine from 5-phospho-alpha-D-ribose 1-diphosphate: step 2/9. This is Phosphoribosyl-ATP pyrophosphatase from Burkholderia vietnamiensis (strain G4 / LMG 22486) (Burkholderia cepacia (strain R1808)).